The following is a 715-amino-acid chain: Transcription factor MST12 (715 aa).

Positions 214-224 (SSSFNAQQVSF) are enriched in low complexity. 3 disordered regions span residues 214 to 243 (SSSF…MPPP), 439 to 469 (AAHR…NSPP), and 518 to 539 (PMPS…AQGG). C2H2-type zinc fingers lie at residues 564-588 (HSCP…VRTH) and 594-616 (YICP…KRTH). A disordered region spans residues 632–691 (EEEYSGDDHLGSLEEASPTSEGGYVTSSLNSAMAHSNTSQHPGSNAVSPNPGPMSHAPTY). Residues 648 to 679 (SPTSEGGYVTSSLNSAMAHSNTSQHPGSNAVS) show a composition bias toward polar residues.

This sequence belongs to the STE12 transcription factor family.

It is found in the nucleus. Its function is as follows. Transcription factor that may function downstream of PMK1 to regulate genes involved in infectious hyphae growth. Is not essential for vegetative growth, conidiation or appressorium formation. May be involved in the regulation of the expression of the cell surface sensor MSB2. This chain is Transcription factor MST12, found in Pyricularia oryzae (strain 70-15 / ATCC MYA-4617 / FGSC 8958) (Rice blast fungus).